A 96-amino-acid polypeptide reads, in one-letter code: MKLPQLLLILLFVVLADSVQPKRCFSNVAGYCRKRCRLVEISEMGCLHGKYCCVNELENKRHKKDTVVEQPMEPRDKSKVQDYMVLPTITYYTITI.

The first 21 residues, M1–P21, serve as a signal peptide directing secretion. 3 cysteine pairs are disulfide-bonded: C24–C52, C32–C46, and C36–C53.

It belongs to the beta-defensin family.

The protein localises to the secreted. Has antibacterial activity. In Rattus norvegicus (Rat), this protein is Beta-defensin 20 (Defb20).